Consider the following 194-residue polypeptide: Holliday junction branch migration complex subunit RuvA (194 aa).

Residues methionine 1–lysine 61 form a domain I region. The segment at threonine 62–methionine 139 is domain II. The tract at residues methionine 139–leucine 143 is flexible linker. The domain III stretch occupies residues glutamate 144–lysine 194.

Belongs to the RuvA family. Homotetramer. Forms an RuvA(8)-RuvB(12)-Holliday junction (HJ) complex. HJ DNA is sandwiched between 2 RuvA tetramers; dsDNA enters through RuvA and exits via RuvB. An RuvB hexamer assembles on each DNA strand where it exits the tetramer. Each RuvB hexamer is contacted by two RuvA subunits (via domain III) on 2 adjacent RuvB subunits; this complex drives branch migration. In the full resolvosome a probable DNA-RuvA(4)-RuvB(12)-RuvC(2) complex forms which resolves the HJ.

The protein localises to the cytoplasm. Functionally, the RuvA-RuvB-RuvC complex processes Holliday junction (HJ) DNA during genetic recombination and DNA repair, while the RuvA-RuvB complex plays an important role in the rescue of blocked DNA replication forks via replication fork reversal (RFR). RuvA specifically binds to HJ cruciform DNA, conferring on it an open structure. The RuvB hexamer acts as an ATP-dependent pump, pulling dsDNA into and through the RuvAB complex. HJ branch migration allows RuvC to scan DNA until it finds its consensus sequence, where it cleaves and resolves the cruciform DNA. The polypeptide is Holliday junction branch migration complex subunit RuvA (Oenococcus oeni (strain ATCC BAA-331 / PSU-1)).